The chain runs to 54 residues: uncharacterized protein (54 aa).

A helical membrane pass occupies residues L32–I52.

Its subcellular location is the host membrane. This is an uncharacterized protein from Cassava vein mosaic virus (CsVMV).